A 416-amino-acid chain; its full sequence is Cell division protein FtsZ (416 aa).

Residues 20–24, 107–109, glutamate 138, arginine 142, and aspartate 186 each bind GTP; these read GGGVN and GTG. Polar residues predominate over residues 319-335; the sequence is QETNANNSSPAQRQAES. The segment at 319–416 is disordered; sequence QETNANNSSP…DSLDFPDFLK (98 aa). Residues 376–392 are compositionally biased toward acidic residues; that stretch reads QDDDIPDDAGFDVDLPA. A compositionally biased stretch (basic and acidic residues) spans 404-416; the sequence is ARKDSLDFPDFLK.

It belongs to the FtsZ family. In terms of assembly, homodimer. Polymerizes to form a dynamic ring structure in a strictly GTP-dependent manner. Interacts directly with several other division proteins.

The protein localises to the cytoplasm. Its function is as follows. Essential cell division protein that forms a contractile ring structure (Z ring) at the future cell division site. The regulation of the ring assembly controls the timing and the location of cell division. One of the functions of the FtsZ ring is to recruit other cell division proteins to the septum to produce a new cell wall between the dividing cells. Binds GTP and shows GTPase activity. The polypeptide is Cell division protein FtsZ (Kocuria rhizophila (strain ATCC 9341 / DSM 348 / NBRC 103217 / DC2201)).